Reading from the N-terminus, the 459-residue chain is Hemopexin (459 aa).

An N-terminal signal peptide occupies residues 1–23 (MARALRVPVALWLLGLCWSLAKA). Disulfide bonds link C52–C232, C150–C155, and C189–C201. Hemopexin repeat units lie at residues 55 to 95 (GWGF…WKDA), 96 to 140 (PSPV…FPGI), 141 to 185 (PFPL…SWPA), and 186 to 232 (VGNC…FMSC). Heme is bound at residue H81. H151 provides a ligand contact to heme. N-linked (GlcNAc...) asparagine glycosylation occurs at N188. An N-linked (GlcNAc...) asparagine glycan is attached at N218. A heme-binding site is contributed by H237. The N-linked (GlcNAc...) asparagine glycan is linked to N241. Cystine bridges form between C250–C453, C359–C401, and C411–C428. Hemopexin repeat units follow at residues 252-297 (PHLV…WPQG), 298-345 (PSTV…FGSP), 350-389 (LHSV…WTEL), and 393-444 (HTKV…LPQA). H286 serves as a coordination point for heme.

It belongs to the hemopexin family.

Its subcellular location is the secreted. Binds heme and transports it to the liver for breakdown and iron recovery, after which the free hemopexin returns to the circulation. The polypeptide is Hemopexin (HPX) (Bos taurus (Bovine)).